A 307-amino-acid polypeptide reads, in one-letter code: Woronin sorting complex protein (307 aa).

The next 3 membrane-spanning stretches (helical) occupy residues 106–125 (MATY…IWIL), 146–167 (NLIV…IAGA), and 207–227 (AWMP…NYIT). Positions 241-264 (GDGAHGDHRHDRERERDRERERHS) are enriched in basic and acidic residues. Residues 241–307 (GDGAHGDHRH…YPSLGQNPRY (67 aa)) form a disordered region. A compositionally biased stretch (low complexity) spans 266-278 (PPHGHGPSHGGRP).

It belongs to the peroxisomal membrane protein PXMP2/4 family. Self-assembles into detergent-resistant oligomers and forms a complex with hex-1 assemblies.

The protein localises to the peroxisome membrane. It localises to the cell septum. Its function is as follows. Woronin sorting complex protein involved in both Woronin bodies (WB) formation and inherence. Localizes to large peroxisome membranes where it self-assembles into detergent-resistant oligomers that envelop hex-1 assemblies, producing asymmetrical nascent WBs. These structures are then delivered to the cell cortex, which permits partitioning of the nascent WB and WB inheritance. The polypeptide is Woronin sorting complex protein (Neurospora crassa (strain ATCC 24698 / 74-OR23-1A / CBS 708.71 / DSM 1257 / FGSC 987)).